The sequence spans 259 residues: Protein GrpE (259 aa).

2 disordered regions span residues 1 to 75 and 227 to 259; these read MNSD…KGSD and GPGP…KDEN. Residues 20–40 are compositionally biased toward low complexity; that stretch reads NNPSENFVSSSNSNESVNQVE. A compositionally biased stretch (basic and acidic residues) spans 46 to 60; sequence EVEHQVKNDSVDTAK. The segment covering 61–73 has biased composition (polar residues); it reads EQSSTSCESNIKG.

This sequence belongs to the GrpE family. Homodimer.

The protein localises to the cytoplasm. Participates actively in the response to hyperosmotic and heat shock by preventing the aggregation of stress-denatured proteins, in association with DnaK and GrpE. It is the nucleotide exchange factor for DnaK and may function as a thermosensor. Unfolded proteins bind initially to DnaJ; upon interaction with the DnaJ-bound protein, DnaK hydrolyzes its bound ATP, resulting in the formation of a stable complex. GrpE releases ADP from DnaK; ATP binding to DnaK triggers the release of the substrate protein, thus completing the reaction cycle. Several rounds of ATP-dependent interactions between DnaJ, DnaK and GrpE are required for fully efficient folding. This is Protein GrpE from Prochlorococcus marinus (strain NATL1A).